We begin with the raw amino-acid sequence, 259 residues long: Undecaprenyl-diphosphatase 4 (259 aa).

A run of 8 helical transmembrane segments spans residues 1-21 (MNWL…FLPI), 39-59 (AGLF…FIYY), 71-91 (FSKL…IGLL), 99-119 (ISKT…FLYM), 133-153 (ITYK…FPAI), 174-194 (AYFS…LQFV), 208-228 (SLIV…SWMI), and 239-259 (FAYY…TDVF).

It belongs to the UppP family.

The protein localises to the cell membrane. It carries out the reaction di-trans,octa-cis-undecaprenyl diphosphate + H2O = di-trans,octa-cis-undecaprenyl phosphate + phosphate + H(+). Functionally, catalyzes the dephosphorylation of undecaprenyl diphosphate (UPP). Confers resistance to bacitracin. This chain is Undecaprenyl-diphosphatase 4, found in Bacillus cereus (strain ZK / E33L).